Here is a 512-residue protein sequence, read N- to C-terminus: DNA-binding protein (512 aa).

Residues 1–105 (MAGRGGSQLE…QDSEDEREAE (105 aa)) are disordered. Positions 9 to 21 (LERRRERTPDRGR) are enriched in basic and acidic residues. Residues 69–78 (QEQPPPPQQP) are compositionally biased toward pro residues. Residues 79–88 (PKKKPRKTKH) show a composition bias toward basic residues. Over residues 96-105 (QDSEDEREAE) the composition is skewed to acidic residues. Tyr-174 carries the phosphotyrosine; by host modification. Cys-263 and His-265 together coordinate Zn(2+). The interval 276 to 310 (IEMDVASENGQRALKENPDRAKVTQNRWGRSVVQL) is flexible loop. 6 residues coordinate Zn(2+): Cys-318, Cys-334, Cys-376, Cys-378, Cys-430, and Cys-447. The C-terminal arm, DBP binding stretch occupies residues 495–512 (VSLPAGHAETSRQNPFDF).

Belongs to the adenoviridae E2A DNA-binding protein family. Homomultimerizes on viral ssDNA bound to pTP. Forms a initiation complex with viral polymerase, pTP and hosts NFIA and POU2F1/OCT1. Interacts with host SRCAP.

Its subcellular location is the host nucleus. Plays a role in the elongation phase of viral strand displacement replication by unwinding the template in an ATP-independent fashion, employing its capacity to form multimers. Also enhances the rate of initiation. Released from template upon second strand synthesis. Assembles in complex with viral pTP, viral pol, host NFIA and host POU2F1/OCT1 on viral origin of replication. Covers the whole ssDNA genome during synthesis. The complementary strand synthesis induces its relese from DNA template. May inhibit cellular transcription mediated by the interaction between host SRCAP and CBP. This is DNA-binding protein from Homo sapiens (Human).